The primary structure comprises 318 residues: UDP-N-acetylenolpyruvoylglucosamine reductase (318 aa).

An FAD-binding PCMH-type domain is found at 39–202; it reads VGGPADLLVR…TRVQLTLRPG (164 aa). Arg-182 is a catalytic residue. Residues 214 to 223 are compositionally biased toward basic and acidic residues; it reads DRDGRRRTQP. The interval 214–235 is disordered; the sequence is DRDGRRRTQPLDRPTFGSTFTN. Ser-231 (proton donor) is an active-site residue. Glu-301 is an active-site residue.

The protein belongs to the MurB family. FAD is required as a cofactor.

It is found in the cytoplasm. The enzyme catalyses UDP-N-acetyl-alpha-D-muramate + NADP(+) = UDP-N-acetyl-3-O-(1-carboxyvinyl)-alpha-D-glucosamine + NADPH + H(+). Its pathway is cell wall biogenesis; peptidoglycan biosynthesis. Functionally, cell wall formation. The protein is UDP-N-acetylenolpyruvoylglucosamine reductase of Anaeromyxobacter sp. (strain Fw109-5).